The sequence spans 519 residues: Sensory neuron membrane protein 2 (519 aa).

Residues 1 to 7 (MLAKHSK) are Cytoplasmic-facing. The chain crosses the membrane as a helical span at residues 8–28 (LFFTGSVVFLIVAIVLASWGF). Residues 29–469 (PKIISTRIQK…DAHALLSYAQ (441 aa)) lie on the Extracellular side of the membrane. N-linked (GlcNAc...) asparagine glycans are attached at residues N44, N67, N104, N166, N229, N272, and N314. 3 cysteine pairs are disulfide-bonded: C268-C338, C299-C362, and C340-C351. Residues 470–490 (LARWIILAAAIILAIIATITV) form a helical membrane-spanning segment. Topologically, residues 491–519 (ARSTSLISWPRNSNSVNFIIGPMVNDKMR) are cytoplasmic.

It belongs to the CD36 family. As to expression, localizes to both male and female antennae but not the leg, wing, gut, head or thoracic ganglia. Detected throughout the sensory epithelium, associating with both sex-pheromone sensilla and plant-volatile sensilla. Differentially expressed among different sensilla and different neurons within a given sensillum.

It localises to the cell membrane. Plays an olfactory role that is not restricted to pheromone sensitivity. The sequence is that of Sensory neuron membrane protein 2 from Manduca sexta (Tobacco hawkmoth).